We begin with the raw amino-acid sequence, 337 residues long: Nucleoid-associated protein Avin_11450 (337 aa).

It belongs to the YejK family.

Its subcellular location is the cytoplasm. It is found in the nucleoid. This chain is Nucleoid-associated protein Avin_11450, found in Azotobacter vinelandii (strain DJ / ATCC BAA-1303).